The sequence spans 429 residues: Ribosomal RNA small subunit methyltransferase B (429 aa).

Residues C254 to K260, D277, D303, and D322 contribute to the S-adenosyl-L-methionine site. The active-site Nucleophile is the C375. Residues A397–D419 form a disordered region. A compositionally biased stretch (polar residues) spans E400 to L412.

Belongs to the class I-like SAM-binding methyltransferase superfamily. RsmB/NOP family.

Its subcellular location is the cytoplasm. The enzyme catalyses cytidine(967) in 16S rRNA + S-adenosyl-L-methionine = 5-methylcytidine(967) in 16S rRNA + S-adenosyl-L-homocysteine + H(+). Its function is as follows. Specifically methylates the cytosine at position 967 (m5C967) of 16S rRNA. The protein is Ribosomal RNA small subunit methyltransferase B of Salmonella choleraesuis (strain SC-B67).